Here is a 61-residue protein sequence, read N- to C-terminus: Large ribosomal subunit protein uL30 (61 aa).

This sequence belongs to the universal ribosomal protein uL30 family. Part of the 50S ribosomal subunit.

The sequence is that of Large ribosomal subunit protein uL30 from Thermobifida fusca (strain YX).